The chain runs to 334 residues: G-protein coupled receptor 12 (334 aa).

Residues 1–48 lie on the Extracellular side of the membrane; that stretch reads MNEDPKVNLSGLPRDCIEAGTPENISAAVPSQGSVVESEPELVVNPWD. N-linked (GlcNAc...) asparagine glycans are attached at residues Asn-8 and Asn-24. The helical transmembrane segment at 49–69 threads the bilayer; the sequence is IVLCSSGTLICCENAVVVLII. Residues 70–78 are Cytoplasmic-facing; it reads FHSPSLRAP. The chain crosses the membrane as a helical span at residues 79-99; it reads MFLLIGSLALADLLAGLGLII. Residues 100-113 are Extracellular-facing; the sequence is NFVFAYLLQSEATK. A helical membrane pass occupies residues 114–134; the sequence is LVTIGLIVASFSASVCSLLAI. At 135–158 the chain is on the cytoplasmic side; sequence TVDRYLSLYYALTYHSERTVTFTY. Residues 159 to 179 form a helical membrane-spanning segment; sequence VMLVMLWGTSTCLGLLPVMGW. Topologically, residues 180–199 are extracellular; that stretch reads NCLRDESTCSVVRPLTKNNA. A helical transmembrane segment spans residues 200 to 220; the sequence is AILSISFLFMFALMLQLYIQI. The Cytoplasmic segment spans residues 221-252; it reads CKIVMRHAHQIALQHHFLATSHYVTTRKGIST. A helical transmembrane segment spans residues 253 to 273; that stretch reads LALILGTFAACWMPFTLYSLI. At 274–282 the chain is on the extracellular side; sequence ADYTYPSIY. The chain crosses the membrane as a helical span at residues 283 to 303; the sequence is TYATLLPATYNSIINPVIYAF. The Cytoplasmic segment spans residues 304 to 334; that stretch reads RNQEIQKALCLICCGCIPNTLSQRARSPSDV. Residue Cys-317 is the site of S-palmitoyl cysteine attachment. 2 positions are modified to phosphoserine: Ser-330 and Ser-332.

Belongs to the G-protein coupled receptor 1 family. Expressed in the brain, pituitary gland and testis.

Its subcellular location is the cell membrane. Its function is as follows. Receptor with constitutive G(s) signaling activity that activates cyclic AMP. Promotes neurite outgrowth and blocks myelin inhibition in neurons. The polypeptide is G-protein coupled receptor 12 (Gpr12) (Rattus norvegicus (Rat)).